A 241-amino-acid polypeptide reads, in one-letter code: Thiamine import ATP-binding protein ThiQ (241 aa).

The region spanning 7–235 (IRLSDVRFSY…AGPEALRHYI (229 aa)) is the ABC transporter domain. 37 to 44 (GPSGSGKS) is an ATP binding site.

The protein belongs to the ABC transporter superfamily. Thiamine importer (TC 3.A.1.19.1) family. The complex is composed of two ATP-binding proteins (ThiQ), two transmembrane proteins (ThiP) and a solute-binding protein (ThiB).

It localises to the cell inner membrane. The catalysed reaction is thiamine(out) + ATP + H2O = thiamine(in) + ADP + phosphate + H(+). Functionally, part of the ABC transporter complex ThiBPQ involved in thiamine import. Responsible for energy coupling to the transport system. The chain is Thiamine import ATP-binding protein ThiQ from Brucella abortus biovar 1 (strain 9-941).